The primary structure comprises 126 residues: Large ribosomal subunit protein uL22 (126 aa).

It belongs to the universal ribosomal protein uL22 family. Part of the 50S ribosomal subunit.

This protein binds specifically to 23S rRNA; its binding is stimulated by other ribosomal proteins, e.g. L4, L17, and L20. It is important during the early stages of 50S assembly. It makes multiple contacts with different domains of the 23S rRNA in the assembled 50S subunit and ribosome. Functionally, the globular domain of the protein is located near the polypeptide exit tunnel on the outside of the subunit, while an extended beta-hairpin is found that lines the wall of the exit tunnel in the center of the 70S ribosome. The polypeptide is Large ribosomal subunit protein uL22 (Cereibacter sphaeroides (strain ATCC 17029 / ATH 2.4.9) (Rhodobacter sphaeroides)).